Consider the following 912-residue polypeptide: Protein translocase subunit SecA (912 aa).

Residues Q87, 105-109, and D509 each bind ATP; that span reads GEGKT. Residues 847–859 show a composition bias toward basic and acidic residues; it reads RERAVSQPVHEDA. The tract at residues 847–912 is disordered; that stretch reads RERAVSQPVH…KYKHCHGKLN (66 aa). Residues 867 to 878 are compositionally biased toward acidic residues; the sequence is AESEEASGESAD. A compositionally biased stretch (basic and acidic residues) spans 881–892; it reads QPVRRDGPKVGR. Residues C896, C898, C907, and H908 each contribute to the Zn(2+) site. A compositionally biased stretch (basic residues) spans 902-912; that stretch reads KKYKHCHGKLN.

This sequence belongs to the SecA family. In terms of assembly, monomer and homodimer. Part of the essential Sec protein translocation apparatus which comprises SecA, SecYEG and auxiliary proteins SecDF-YajC and YidC. It depends on Zn(2+) as a cofactor.

It is found in the cell inner membrane. Its subcellular location is the cytoplasm. It catalyses the reaction ATP + H2O + cellular proteinSide 1 = ADP + phosphate + cellular proteinSide 2.. Part of the Sec protein translocase complex. Interacts with the SecYEG preprotein conducting channel. Has a central role in coupling the hydrolysis of ATP to the transfer of proteins into and across the cell membrane, serving both as a receptor for the preprotein-SecB complex and as an ATP-driven molecular motor driving the stepwise translocation of polypeptide chains across the membrane. In Chromohalobacter salexigens (strain ATCC BAA-138 / DSM 3043 / CIP 106854 / NCIMB 13768 / 1H11), this protein is Protein translocase subunit SecA.